A 345-amino-acid polypeptide reads, in one-letter code: tRNA pseudouridine synthase B (345 aa).

The interval 1–33 is disordered; sequence MGGNSQPHQEPRRVNNDPRAKQQKGNQVRRDRR. A compositionally biased stretch (basic and acidic residues) spans 9-20; sequence QEPRRVNNDPRA. Asp-72 acts as the Nucleophile in catalysis.

It belongs to the pseudouridine synthase TruB family. Type 1 subfamily.

The catalysed reaction is uridine(55) in tRNA = pseudouridine(55) in tRNA. Responsible for synthesis of pseudouridine from uracil-55 in the psi GC loop of transfer RNAs. This Bradyrhizobium diazoefficiens (strain JCM 10833 / BCRC 13528 / IAM 13628 / NBRC 14792 / USDA 110) protein is tRNA pseudouridine synthase B.